Consider the following 295-residue polypeptide: Ribosomal RNA small subunit methyltransferase H (295 aa).

S-adenosyl-L-methionine is bound by residues 35–37 (GGH), Glu-55, Phe-82, Asp-103, and Gln-110.

Belongs to the methyltransferase superfamily. RsmH family.

Its subcellular location is the cytoplasm. It carries out the reaction cytidine(1402) in 16S rRNA + S-adenosyl-L-methionine = N(4)-methylcytidine(1402) in 16S rRNA + S-adenosyl-L-homocysteine + H(+). Functionally, specifically methylates the N4 position of cytidine in position 1402 (C1402) of 16S rRNA. The polypeptide is Ribosomal RNA small subunit methyltransferase H (Desulfotalea psychrophila (strain LSv54 / DSM 12343)).